The chain runs to 318 residues: MSVPAAAGAARHRRRHVLDLDDFSAQEIDEILETAVSMKEVLGRAIKQVPTLRGKTIVNMFFEESTRTRISFELAGKALSANVVNFTARGSSVEKGESLIDTVRTLQALGADMLVMRHSESGAPYLVAQHFHGSVINAGDGRHAHPTQALLDLFTVRQRLGRIEGLKVVIVGDILHSRVARSDLWGFTRMGALVTLCAPQTLIGPEAFWKATWPDLTITSNLDECVRDADVIMTLRLQKERMEAGLLPSLREYTRFFAITAERVARAAPHCLVMHPGPMNEGVEIMPDVAVSAQSVIEEQVANGVAVRMALLYRLSGE.

2 residues coordinate carbamoyl phosphate: Arg-67 and Thr-68. Lys-95 provides a ligand contact to L-aspartate. Residues Arg-117, His-145, and Gln-148 each contribute to the carbamoyl phosphate site. The L-aspartate site is built by Arg-178 and Arg-236. Carbamoyl phosphate is bound by residues Gly-277 and Pro-278.

This sequence belongs to the aspartate/ornithine carbamoyltransferase superfamily. ATCase family. As to quaternary structure, heterododecamer (2C3:3R2) of six catalytic PyrB chains organized as two trimers (C3), and six regulatory PyrI chains organized as three dimers (R2).

The enzyme catalyses carbamoyl phosphate + L-aspartate = N-carbamoyl-L-aspartate + phosphate + H(+). It participates in pyrimidine metabolism; UMP biosynthesis via de novo pathway; (S)-dihydroorotate from bicarbonate: step 2/3. In terms of biological role, catalyzes the condensation of carbamoyl phosphate and aspartate to form carbamoyl aspartate and inorganic phosphate, the committed step in the de novo pyrimidine nucleotide biosynthesis pathway. The chain is Aspartate carbamoyltransferase catalytic subunit from Roseiflexus castenholzii (strain DSM 13941 / HLO8).